Here is a 358-residue protein sequence, read N- to C-terminus: 4-hydroxy-3-methylbut-2-en-1-yl diphosphate synthase (flavodoxin) (358 aa).

[4Fe-4S] cluster-binding residues include Cys265, Cys268, Cys300, and Glu307.

This sequence belongs to the IspG family. It depends on [4Fe-4S] cluster as a cofactor.

It carries out the reaction (2E)-4-hydroxy-3-methylbut-2-enyl diphosphate + oxidized [flavodoxin] + H2O + 2 H(+) = 2-C-methyl-D-erythritol 2,4-cyclic diphosphate + reduced [flavodoxin]. Its pathway is isoprenoid biosynthesis; isopentenyl diphosphate biosynthesis via DXP pathway; isopentenyl diphosphate from 1-deoxy-D-xylulose 5-phosphate: step 5/6. Its function is as follows. Converts 2C-methyl-D-erythritol 2,4-cyclodiphosphate (ME-2,4cPP) into 1-hydroxy-2-methyl-2-(E)-butenyl 4-diphosphate. The protein is 4-hydroxy-3-methylbut-2-en-1-yl diphosphate synthase (flavodoxin) of Maridesulfovibrio salexigens (strain ATCC 14822 / DSM 2638 / NCIMB 8403 / VKM B-1763) (Desulfovibrio salexigens).